The sequence spans 67 residues: Large ribosomal subunit protein uL29 (67 aa).

It belongs to the universal ribosomal protein uL29 family.

In Staphylothermus marinus (strain ATCC 43588 / DSM 3639 / JCM 9404 / F1), this protein is Large ribosomal subunit protein uL29.